A 533-amino-acid chain; its full sequence is Glucose-6-phosphate exchanger SLC37A1 (533 aa).

A helical transmembrane segment spans residues 18-38 (QWYRAFIFILTFLLYASFHLS). Asn-81 carries N-linked (GlcNAc...) asparagine glycosylation. The next 4 helical transmembrane spans lie at 100–120 (GALDYSFLCAYAVGMYLSGII), 129–149 (YLTFGMLASGAFTALFGLGYF), 157–177 (FYVVTQVINGLVQTTGWPSVV), and 222–242 (SFVVPGAIVAAMGIVCFLFLI). Asn-263 carries an N-linked (GlcNAc...) asparagine glycan. 7 helical membrane-spanning segments follow: residues 304–324 (VVILPGDGGSGTAAISFTGAL), 334–354 (LCLLFAKLVSYTFLFWLPLYI), 366–386 (GELSTLFDVGGIFGGILAGVI), 394–414 (ASTCGLMLLLAAPTLYIFSTV), 423–443 (IAMLLLSGALVSGPYTLITTA), 466–486 (AIIDGTGSVGAALGPLLAGLL), and 490–510 (GWSNVFYMLMFADACALLFLI).

It belongs to the major facilitator superfamily. Organophosphate:Pi antiporter (OPA) (TC 2.A.1.4) family. Expressed in numerous tissues, with highest expression in pancreas, kidney, bone marrow, spleen, liver, small intestine, as well as in fetal brain, liver and spleen.

It localises to the endoplasmic reticulum membrane. The catalysed reaction is D-glucose 6-phosphate(in) + phosphate(out) = D-glucose 6-phosphate(out) + phosphate(in). With respect to regulation, inhibited by vanadate but not by chlorogenic acid. Its function is as follows. Inorganic phosphate and glucose-6-phosphate antiporter. May transport cytoplasmic glucose-6-phosphate into the lumen of the endoplasmic reticulum and translocate inorganic phosphate into the opposite direction. Independent of a lumenal glucose-6-phosphatase. May not play a role in homeostatic regulation of blood glucose levels. This is Glucose-6-phosphate exchanger SLC37A1 from Homo sapiens (Human).